The primary structure comprises 215 residues: Octanoyltransferase (215 aa).

A BPL/LPL catalytic domain is found at Thr-31–Glu-206. Substrate contacts are provided by residues Arg-70–His-77, Ser-137–Gly-139, and Gly-150–Ala-152. The active-site Acyl-thioester intermediate is Cys-168.

It belongs to the LipB family.

It localises to the cytoplasm. It carries out the reaction octanoyl-[ACP] + L-lysyl-[protein] = N(6)-octanoyl-L-lysyl-[protein] + holo-[ACP] + H(+). It functions in the pathway protein modification; protein lipoylation via endogenous pathway; protein N(6)-(lipoyl)lysine from octanoyl-[acyl-carrier-protein]: step 1/2. Functionally, catalyzes the transfer of endogenously produced octanoic acid from octanoyl-acyl-carrier-protein onto the lipoyl domains of lipoate-dependent enzymes. Lipoyl-ACP can also act as a substrate although octanoyl-ACP is likely to be the physiological substrate. The sequence is that of Octanoyltransferase from Pseudomonas fluorescens (strain ATCC BAA-477 / NRRL B-23932 / Pf-5).